A 1515-amino-acid polypeptide reads, in one-letter code: Homeobox protein cut-like 1 (1515 aa).

Residues 56 to 361 (LLKSFQGEID…VKKELNTLKS (306 aa)) adopt a coiled-coil conformation. Over residues 393–405 (ENATLRISNSDLS) the composition is skewed to polar residues. Disordered stretches follow at residues 393-453 (ENAT…SPAG), 509-546 (PYST…ISEG), 644-666 (PKRR…TGSD), and 680-702 (LQVQ…NSDD). The span at 422 to 432 (GPLPASPPPQL) shows a compositional bias: pro residues. Residue Ser427 is modified to Phosphoserine. The segment covering 436–447 (TGEQVSNTNGTH) has biased composition (polar residues). Low complexity predominate over residues 514 to 544 (SISSPSPLQQSPDVNGMAPSPSQSESAGSIS). The segment at residues 540–627 (AGSISEGEEI…ILALRSIQGR (88 aa)) is a DNA-binding region (CUT 1). Residue Ser761 is modified to Phosphoserine. Disordered regions lie at residues 769-871 (PETS…SASA) and 884-923 (YSQS…PSVP). Glycyl lysine isopeptide (Lys-Gly) (interchain with G-Cter in SUMO2) cross-links involve residues Lys783, Lys809, and Lys840. The span at 828 to 852 (PERRNLTSSEETKADETTASGKERA) shows a compositional bias: basic and acidic residues. 2 stretches are compositionally biased toward polar residues: residues 853 to 868 (GSSQ…QGPS) and 884 to 906 (YSQS…NSPL). Phosphoserine is present on Ser904. A DNA-binding region (CUT 2) is located at residues 929-1016 (QYEVYMYQEV…QGVLPVQGQQ (88 aa)). Residues 1032–1044 (QQGCVSSESTPKT) show a composition bias toward polar residues. The tract at residues 1032-1105 (QQGCVSSEST…QPTTPLPLSG (74 aa)) is disordered. Residues 1045–1061 (SASCSPAPESPMSSSES) show a composition bias toward low complexity. Ser1054 and Ser1064 each carry phosphoserine. Residues 1112-1199 (QELVAMSPEL…VEKLMDMKRM (88 aa)) constitute a DNA-binding region (CUT 3). Residues 1207–1242 (RRHSSVSDSQPCEPPSVGIDYSQGASPQPQHQLKKP) are disordered. The homeobox DNA-binding region spans 1239 to 1298 (LKKPRVVLAPEEKEALKRAYQQKPYPSPKTIEELATQLNLKTSTVINWFHNYRSRIRREL). Ser1265 is modified (phosphoserine). Lys1279 participates in a covalent cross-link: Glycyl lysine isopeptide (Lys-Gly) (interchain with G-Cter in SUMO2). The interval 1307–1488 (SQGQAGASDS…AGARDNPVRK (182 aa)) is disordered. The span at 1313 to 1328 (ASDSPSARSSRAAPSS) shows a compositional bias: low complexity. The span at 1331–1343 (DSCDGVEATDAEE) shows a compositional bias: acidic residues. Residue Ser1332 is modified to Phosphoserine. Positions 1365-1378 (ADREEATQPAEKAK) are enriched in basic and acidic residues. Residues 1406–1468 (ADAPAPVPSL…ANAPARRPSS (63 aa)) are compositionally biased toward low complexity. Phosphoserine is present on residues Ser1468, Ser1496, and Ser1506.

Belongs to the CUT homeobox family. Interacts with BANP. Interacts with SATB1 (via DNA-binding domains); the interaction inhibits the attachment of both proteins to DNA. Phosphorylated by PKA. In terms of processing, as cells progress into S phase, a fraction of CUX1 molecules is proteolytically processed into N-terminally truncated proteins of 110 kDa by CTSL. Cell cycle-dependent processing of CUX1 serves to generate a CDP/Cux p110 with distinct DNA binding and transcriptional properties. Testis-specific where it is expressed in germ cells.

The protein resides in the nucleus. Transcription factor involved in the control of neuronal differentiation in the brain. Regulates dendrite development and branching, and dendritic spine formation in cortical layers II-III. Also involved in the control of synaptogenesis. In addition, it has probably a broad role in mammalian development as a repressor of developmentally regulated gene expression. May act by preventing binding of positively-activing CCAAT factors to promoters. Component of nf-munr repressor; binds to the matrix attachment regions (MARs) (5' and 3') of the immunoglobulin heavy chain enhancer. Represses T-cell receptor (TCR) beta enhancer function by binding to MARbeta, an ATC-rich DNA sequence located upstream of the TCR beta enhancer. Binds to the TH enhancer; may require the basic helix-loop-helix protein TCF4 as a coactivator. In terms of biological role, plays a role in cell cycle progression, in particular at the G1/S transition. As cells progress into S phase, a fraction of CUX1 molecules is proteolytically processed into N-terminally truncated proteins of 110 kDa. While CUX1 only transiently binds to DNA and carries the CCAAT-displacement activity, CDP/Cux p110 makes a stable interaction with DNA and stimulates expression of genes such as POLA1. This chain is Homeobox protein cut-like 1, found in Mus musculus (Mouse).